We begin with the raw amino-acid sequence, 563 residues long: GTPase Obg (563 aa).

In terms of domain architecture, Obg spans 2–168; it reads SDFVDRVTVH…RDVILELKSI (167 aa). Residues 169–349 enclose the OBG-type G domain; the sequence is ADVALVGFPS…LNWALADLVT (181 aa). Residues 175–182, 200–204, 221–224, 301–304, and 330–332 each bind GTP; these read GFPSAGKS, FTTLV, DVPG, NKVD, and STA. Serine 182 and threonine 202 together coordinate Mg(2+). The 87-residue stretch at 383–469 folds into the OCT domain; sequence DEGGNALDFT…DRAVEFDWDP (87 aa). Residues 525-563 are disordered; sequence MMAERKAGHWADPSVDDDRHDETSLFGRGETADDEDVEQ.

It belongs to the TRAFAC class OBG-HflX-like GTPase superfamily. OBG GTPase family. As to quaternary structure, monomer. Mg(2+) serves as cofactor.

The protein resides in the cytoplasm. Its function is as follows. An essential GTPase which binds GTP, GDP and possibly (p)ppGpp with moderate affinity, with high nucleotide exchange rates and a fairly low GTP hydrolysis rate. Plays a role in control of the cell cycle, stress response, ribosome biogenesis and in those bacteria that undergo differentiation, in morphogenesis control. This chain is GTPase Obg, found in Bifidobacterium adolescentis (strain ATCC 15703 / DSM 20083 / NCTC 11814 / E194a).